A 441-amino-acid chain; its full sequence is Signal recognition particle 54 kDa protein (441 aa).

Residues 104-111 (GLQGSGKT), 186-190 (DTAGR), and 244-247 (TKLD) contribute to the GTP site.

This sequence belongs to the GTP-binding SRP family. SRP54 subfamily. As to quaternary structure, part of the signal recognition particle protein translocation system, which is composed of SRP and FtsY. Archaeal SRP consists of a 7S RNA molecule of 300 nucleotides and two protein subunits: SRP54 and SRP19.

It localises to the cytoplasm. The enzyme catalyses GTP + H2O = GDP + phosphate + H(+). Functionally, involved in targeting and insertion of nascent membrane proteins into the cytoplasmic membrane. Binds to the hydrophobic signal sequence of the ribosome-nascent chain (RNC) as it emerges from the ribosomes. The SRP-RNC complex is then targeted to the cytoplasmic membrane where it interacts with the SRP receptor FtsY. The chain is Signal recognition particle 54 kDa protein from Staphylothermus marinus (strain ATCC 43588 / DSM 3639 / JCM 9404 / F1).